The sequence spans 325 residues: ATP synthase gamma chain (325 aa).

The protein belongs to the ATPase gamma chain family. F-type ATPases have 2 components, CF(1) - the catalytic core - and CF(0) - the membrane proton channel. CF(1) has five subunits: alpha(3), beta(3), gamma(1), delta(1), epsilon(1). CF(0) has three main subunits: a, b and c.

It is found in the cell membrane. Functionally, produces ATP from ADP in the presence of a proton gradient across the membrane. The gamma chain is believed to be important in regulating ATPase activity and the flow of protons through the CF(0) complex. The chain is ATP synthase gamma chain from Corynebacterium glutamicum (strain R).